A 132-amino-acid chain; its full sequence is MDSRTGEPITVPQAENGVYIWEITNPLYFKIISVEDPLYTNTRIYHLQIRFNHNLRRALDLHKAFLNFQVWTTSTTASGRTYLNRFKYLVMLYLEQLGVICINNVIRAVRFATDRSYITHVLENHSIKYKFY.

Belongs to the geminiviridae replication enhancer protein family. As to quaternary structure, homooligomer. Interacts with the replication-associated protein (REP). Interacts with host proliferating cell nuclear antigen (PCNA). Interacts with host retinoblastoma-related protein 1 (RBR1), and may thereby deregulate the host cell cycle. Oligomerization and interaction with PCNA are necessary for optimal replication enhancement.

Increases viral DNA accumulation. Enhances infectivity and symptom expression. The polypeptide is Replication enhancer protein (Solanum lycopersicum (Tomato)).